A 516-amino-acid chain; its full sequence is DNA-(apurinic or apyrimidinic site) endonuclease 2 (516 aa).

Mg(2+)-binding residues include N8 and E47. Residue Y155 is part of the active site. Residues D196, N198, D302, and H303 each coordinate Mg(2+). D196 serves as the catalytic Proton donor/acceptor. The active-site Proton acceptor is the H303. Polar residues predominate over residues 357 to 366 (QPSHQIQAQR). The segment at 357–389 (QPSHQIQAQRQPRKACMHSTRLRKSQGGPKRKQ) is disordered. Residues 367–389 (QPRKACMHSTRLRKSQGGPKRKQ) show a composition bias toward basic residues. K370 participates in a covalent cross-link: Glycyl lysine isopeptide (Lys-Gly) (interchain with G-Cter in ubiquitin). The required for the interaction and colocalization with PCNA in nuclear foci in presence of oxidative-induced DNA damaging agents stretch occupies residues 389–396 (QKNLMSYF). The Zn(2+) site is built by C467, H470, C493, and C507. The segment at 467–516 (CGGHREPCVMRTVKKTGPNFGRQFYMCARPRGPPSDPSSRCNFFLWSRPS) adopts a GRF-type zinc-finger fold.

It belongs to the DNA repair enzymes AP/ExoA family. In terms of assembly, interacts with PCNA. This interaction is increased by misincorporation of uracil in nuclear DNA. Mg(2+) serves as cofactor. Mn(2+) is required as a cofactor. Post-translationally, ubiquitinated by the CUL9-RBX1 complex. Ubiquitinated by MKRN3 at Lys-370 leading to proteasomal degradation. Expressed in lymphocytes, thymocytes and splenocytes (at protein level). Highly expressed in the thymus and weakly expressed in the bone marrow, spleen, eye, kidney, lung, brain and uterus.

The protein localises to the nucleus. Its subcellular location is the cytoplasm. It localises to the mitochondrion. The enzyme catalyses Exonucleolytic cleavage in the 3'- to 5'-direction to yield nucleoside 5'-phosphates.. Its activity is regulated as follows. 3'-5' exonuclease activity is activated by sodium and manganese. 3'-5' exonuclease and 3'-phosphodiesterase activities are stimulated in presence of PCNA. Its function is as follows. Functions as a weak apurinic/apyrimidinic (AP) endodeoxyribonuclease in the DNA base excision repair (BER) pathway of DNA lesions induced by oxidative and alkylating agents. Initiates repair of AP sites in DNA by catalyzing hydrolytic incision of the phosphodiester backbone immediately adjacent to the damage, generating a single-strand break with 5'-deoxyribose phosphate and 3'-hydroxyl ends. Also displays double-stranded DNA 3'-5' exonuclease, 3'-phosphodiesterase activities. Shows robust 3'-5' exonuclease activity on 3'-recessed heteroduplex DNA and is able to remove mismatched nucleotides preferentially. Shows fairly strong 3'-phosphodiesterase activity involved in the removal of 3'-damaged termini formed in DNA by oxidative agents. In the nucleus functions in the PCNA-dependent BER pathway. Plays a role in reversing blocked 3' DNA ends, problematic lesions that preclude DNA synthesis. Required for somatic hypermutation (SHM) and DNA cleavage step of class switch recombination (CSR) of immunoglobulin genes. Required for proper cell cycle progression during proliferation of peripheral lymphocytes. This Mus musculus (Mouse) protein is DNA-(apurinic or apyrimidinic site) endonuclease 2 (Apex2).